Reading from the N-terminus, the 169-residue chain is Phosphopantetheine adenylyltransferase (169 aa).

Thr-14 provides a ligand contact to substrate. ATP contacts are provided by residues 14–15 and His-22; that span reads TF. Substrate contacts are provided by Lys-46, Leu-78, and Arg-92. ATP contacts are provided by residues 93–95, Glu-103, and 128–134; these read GLR and HSFISSS.

This sequence belongs to the bacterial CoaD family. In terms of assembly, homohexamer. It depends on Mg(2+) as a cofactor.

The protein localises to the cytoplasm. It carries out the reaction (R)-4'-phosphopantetheine + ATP + H(+) = 3'-dephospho-CoA + diphosphate. It participates in cofactor biosynthesis; coenzyme A biosynthesis; CoA from (R)-pantothenate: step 4/5. Its function is as follows. Reversibly transfers an adenylyl group from ATP to 4'-phosphopantetheine, yielding dephospho-CoA (dPCoA) and pyrophosphate. In Stenotrophomonas maltophilia (strain K279a), this protein is Phosphopantetheine adenylyltransferase.